The following is a 36-amino-acid chain: Amanexitide proprotein 2 (36 aa).

Positions 1-10 (MSDINATRLP) are excised as a propeptide. Positions 11–19 (VFSLPVFFP) form a cross-link, cyclopeptide (Val-Pro). A propeptide spanning residues 20-36 (FVSDDIQAVLTRGESLC) is cleaved from the precursor.

The protein belongs to the MSDIN fungal toxin family. In terms of processing, processed by the macrocyclase-peptidase enzyme POPB to yield a toxic cyclic nonapeptide. POPB first removes 10 residues from the N-terminus. Conformational trapping of the remaining peptide forces the enzyme to release this intermediate rather than proceed to macrocyclization. The enzyme rebinds the remaining peptide in a different conformation and catalyzes macrocyclization of the N-terminal 9 residues. In terms of tissue distribution, expressed in basidiocarps.

Functionally, cyclic nonapeptide that belongs to the MSDIN-like toxin family responsible for a large number of food poisoning cases and deaths. The protein is Amanexitide proprotein 2 of Amanita exitialis (Guangzhou destroying angel).